The primary structure comprises 215 residues: 3-demethoxyubiquinol 3-hydroxylase (215 aa).

Fe cation contacts are provided by glutamate 64, glutamate 94, histidine 97, glutamate 146, glutamate 178, and histidine 181.

This sequence belongs to the COQ7 family. Fe cation is required as a cofactor.

The protein localises to the cell membrane. It catalyses the reaction a 5-methoxy-2-methyl-3-(all-trans-polyprenyl)benzene-1,4-diol + AH2 + O2 = a 3-demethylubiquinol + A + H2O. It participates in cofactor biosynthesis; ubiquinone biosynthesis. In terms of biological role, catalyzes the hydroxylation of 2-nonaprenyl-3-methyl-6-methoxy-1,4-benzoquinol during ubiquinone biosynthesis. The protein is 3-demethoxyubiquinol 3-hydroxylase of Pseudomonas fluorescens (strain SBW25).